The chain runs to 474 residues: Glutamate--tRNA ligase (474 aa).

A 'HIGH' region motif is present at residues 9–19; sequence PSPTGYLHVGG. The 'KMSKS' region motif lies at 240–244; the sequence is KLSKR. Lys-243 is an ATP binding site.

This sequence belongs to the class-I aminoacyl-tRNA synthetase family. Glutamate--tRNA ligase type 1 subfamily. As to quaternary structure, monomer.

The protein resides in the cytoplasm. The catalysed reaction is tRNA(Glu) + L-glutamate + ATP = L-glutamyl-tRNA(Glu) + AMP + diphosphate. Functionally, catalyzes the attachment of glutamate to tRNA(Glu) in a two-step reaction: glutamate is first activated by ATP to form Glu-AMP and then transferred to the acceptor end of tRNA(Glu). The sequence is that of Glutamate--tRNA ligase from Vibrio cholerae serotype O1 (strain ATCC 39315 / El Tor Inaba N16961).